The sequence spans 873 residues: Coatomer subunit gamma-2 (873 aa).

A compositionally biased stretch (basic and acidic residues) spans 1–11; sequence MIKKFDKKDEE. The disordered stretch occupies residues 1–21; it reads MIKKFDKKDEESGSGSNPFQH. 6 HEAT repeats span residues 64 to 101, 283 to 320, 321 to 355, 356 to 392, 395 to 430, and 467 to 504; these read TEAT…ISED, RELA…KHPS, AVTA…GSES, SVDR…KYPR, SVMM…ENPE, and PTPS…QNDD.

Belongs to the COPG family. In terms of assembly, oligomeric complex.

The protein localises to the cytoplasm. It is found in the golgi apparatus membrane. It localises to the cytoplasmic vesicle. The protein resides in the COPI-coated vesicle membrane. Functionally, the coatomer is a cytosolic protein complex that binds to dilysine motifs and reversibly associates with Golgi non-clathrin-coated vesicles, which further mediate biosynthetic protein transport from the ER, via the Golgi up to the trans Golgi network. Coatomer complex is required for budding from Golgi membranes, and is essential for the retrograde Golgi-to-ER transport of dilysine-tagged proteins. This chain is Coatomer subunit gamma-2 (copg2), found in Danio rerio (Zebrafish).